The sequence spans 250 residues: MSVTMREMLEAGVHFGHQTRFWNPKMAPFIFGHRNKIHIINLEKSLPMFQEAQKFAKQLAANRGTILMVGTKRQARELVAEQAQRAGVPYVDQRWLGGMLTNFKTVKTSIKRLKDMKAQQEAGLESMSKKEQLMFSRELEKLEKDIGGIQDMAALPDAIFVIDVGYHKIAVSEAKKLGIPLIGVVDSNHSPEGIDYVIPGNDDSAKAVALYARGIADAILEGRANAVTEVAKAVAAEGSDEFVEVDENAA.

This sequence belongs to the universal ribosomal protein uS2 family.

The protein is Small ribosomal subunit protein uS2 of Acidovorax sp. (strain JS42).